Consider the following 1295-residue polypeptide: MKILRGSPALSAFRITKLLSVCQEQQLPVNDIYAEYVHFAEINASLSDVDSAKLQQLLKYGPSLAEHEPQGTLLLVTPRPGTISPWSSKATDIAHNCGLSQVVRLERGVAYYIQSGEMSDTQWQILSSLLHDRMMETVFTQLEQAEKLFSRQQPVPLKRIDILQAGRSALETANIELGLALASDEIDYLMDAFQKLGRNPTDVELYMFAQANSEHCRHKIFNADWIIDSQAQPKSLFKMIKNTYEQTPDYVLSAYKDNAAVMEGSAVGRFFASAENGSYDYHQEQAHILMKVETHNHPTAISPWPGASTGSGGEIRDEGATGRGAKPKAGLVGFSVSNLRIPGFEQPWEEDFGKPERIVSALDIMMEGPLGGAAFNNEFGRPALLGYFRTYEEKVNSHNGSELRGYHKPIMLAGGIGNIRDEHVKKGEISVGAKLIVLGGPSMNIGLGGGAASSMASGQSDADLDFASVQRDNPEMERRCQEVIDRCWQLGENNPILFIHDVGAGGLSNAMPELVSDGGRGGRFELRKILNDEPGMSPLEVWCNESQERYVLAVAPEQLPLFEEICRRERAPYAIIGEATEERHLLLNDEHFDNQPIDMPLDVLLGKTPKMLRDVTTLKASGESLERRDIDLAEAVKRIMHLPAVAEKTFLITIGDRSVTGMVSRDQMVGPWQIPVADCAVTTASLDSYYGEAMSMGERAPVALLDFAASARMAVGEALTNIASAYIQDLKRIKLSANWMSAAGHPGEDAGLYAAVKAVGEELCPALGLTIPVGKDSMSMKTRWHDQGEEREMTAPLSLVITAFARVEDVRRTVTPELSTDEDNALLLIDLGQGKNTLGGTALAQVYRLLGNKTADVRSAEQLAGFFNAIQQLIAEQKLLAYHDRSDGGLLVTLAEMAFAGHCGIEADISVFDEDILAGLFTEELGAVVQIRASDRGFVESILAEHGLADCVHYLGKAQAGDDFVIFSGNTEVYRQNRSTLRLWWAETTWQMQRLRDNPACADQEHQAKQDNQDPGLNVKLTFDISEDIAAPYILQQVRPKVAVLREQGVNSHVEMAAAFHRAGFEAIDVHMSDLLSGRIGLSQFQTLVACGGFSYGDVLGAGEGWAKSILFNERVRDQFAVFFARPDTLALGVCNGCQMMSNLRELIPGAEHWPRFVRNRSERFEARFSLVEITDSPSLFLQDMVGSRIPIAVSHGEGQVEFRNRQHLEMLESNQLVALRYVNNYGQVTENYPANPNGSVNGITAVTSLDGRATVMMPHPERVSRTVNNSWHPDEWREDGPWMRIFRNARKQLG.

The segment at 302–327 (SPWPGASTGSGGEIRDEGATGRGAKP) is disordered. ATP is bound by residues 306–317 (GASTGSGGEIRD) and A677. D678, E717, N721, and D884 together coordinate Mg(2+). Residue S886 participates in ATP binding. The Glutamine amidotransferase type-1 domain maps to 1042-1295 (VAVLREQGVN…IFRNARKQLG (254 aa)). The Nucleophile role is filled by C1135. Catalysis depends on residues H1260 and E1262.

It in the N-terminal section; belongs to the FGAMS family. As to quaternary structure, monomer.

It is found in the cytoplasm. It carries out the reaction N(2)-formyl-N(1)-(5-phospho-beta-D-ribosyl)glycinamide + L-glutamine + ATP + H2O = 2-formamido-N(1)-(5-O-phospho-beta-D-ribosyl)acetamidine + L-glutamate + ADP + phosphate + H(+). The protein operates within purine metabolism; IMP biosynthesis via de novo pathway; 5-amino-1-(5-phospho-D-ribosyl)imidazole from N(2)-formyl-N(1)-(5-phospho-D-ribosyl)glycinamide: step 1/2. Its function is as follows. Phosphoribosylformylglycinamidine synthase involved in the purines biosynthetic pathway. Catalyzes the ATP-dependent conversion of formylglycinamide ribonucleotide (FGAR) and glutamine to yield formylglycinamidine ribonucleotide (FGAM) and glutamate. This is Phosphoribosylformylglycinamidine synthase from Photorhabdus laumondii subsp. laumondii (strain DSM 15139 / CIP 105565 / TT01) (Photorhabdus luminescens subsp. laumondii).